The primary structure comprises 419 residues: DNA ligase (419 aa).

Residues 1-120 (MLNHFPGHCS…ARQKRGAHTN (120 aa)) form an NTD region. The segment at 121-317 (TGMIPPMLVK…NYHSAHLAKL (197 aa)) is AD domain. Lys151 functions as the N6-AMP-lysine intermediate in the catalytic mechanism. The OB domain stretch occupies residues 318 to 419 (KPLLDAEFIL…REPINVLEII (102 aa)).

Belongs to the ATP-dependent DNA ligase family.

Its subcellular location is the virion. The enzyme catalyses ATP + (deoxyribonucleotide)n-3'-hydroxyl + 5'-phospho-(deoxyribonucleotide)m = (deoxyribonucleotide)n+m + AMP + diphosphate.. Functionally, very low-fidelity DNA ligase that seals nicks in double-stranded DNA during DNA repair. Together with the viral repair DNA polymerase X, fills the single nucleotide gaps generated by the AP endonuclease. It is not essential for viral replication and recombination. Displays a very low adenylation activity towards DNA with 3'-dideoxy- or 3'-amino-terminated nicks compared to regular nick DNA. This Ornithodoros (relapsing fever ticks) protein is DNA ligase.